We begin with the raw amino-acid sequence, 290 residues long: Enoyl-CoA hydratase, mitochondrial (290 aa).

A mitochondrion-targeting transit peptide spans 1–29 (MAALRALLPRACNSLLSPVRCPEFRRFAS). 98-101 (ADIK) lines the substrate pocket. 2 positions are modified to N6-acetyllysine; alternate: K101 and K115. 2 positions are modified to N6-succinyllysine; alternate: K101 and K115. G141 provides a ligand contact to substrate. Residue K204 is modified to N6-succinyllysine. N6-acetyllysine is present on K211.

The protein belongs to the enoyl-CoA hydratase/isomerase family. In terms of assembly, homohexamer; dimer of trimers. In terms of tissue distribution, detected in liver (at protein level).

The protein resides in the mitochondrion matrix. The enzyme catalyses a (3S)-3-hydroxyacyl-CoA = a (2E)-enoyl-CoA + H2O. It catalyses the reaction a (3E)-enoyl-CoA = a 4-saturated (2E)-enoyl-CoA. The catalysed reaction is (3E)-hexenoyl-CoA = (2E)-hexenoyl-CoA. It carries out the reaction (3S)-3-hydroxybutanoyl-CoA = (2E)-butenoyl-CoA + H2O. The enzyme catalyses 3-hydroxyisovaleryl-CoA = 3-methylbut-2-enoyl-CoA + H2O. It catalyses the reaction 3-hydroxypropanoyl-CoA = acryloyl-CoA + H2O. The catalysed reaction is 3-hydroxybutanoyl-CoA = (2E)-butenoyl-CoA + H2O. It carries out the reaction 2-methylpropenoyl-CoA + H2O = (S)-3-hydroxyisobutanoyl-CoA. The enzyme catalyses (3S)-hydroxyhexanoyl-CoA = (2E)-hexenoyl-CoA + H2O. It catalyses the reaction (3S)-hydroxydecanoyl-CoA = (2E)-decenoyl-CoA + H2O. The protein operates within lipid metabolism; fatty acid beta-oxidation. Its function is as follows. Converts unsaturated trans-2-enoyl-CoA species ((2E)-enoyl-CoA) to the corresponding 3(S)-3-hydroxyacyl-CoA species through addition of a water molecule to the double bond. Catalyzes the hydration of medium- and short-chained fatty enoyl-CoA thioesters from 4 carbons long (C4) up to C16. Has high substrate specificity for crotonyl-CoA ((2E)-butenoyl-CoA) and moderate specificity for acryloyl-CoA, 3-methylcrotonyl-CoA (3-methyl-(2E)-butenoyl-CoA) and methacrylyl-CoA ((2E)-2-methylpropenoyl-CoA). Can bind tiglyl-CoA (2-methylcrotonoyl-CoA), but hydrates only a small amount of this substrate. Plays a key role in the beta-oxidation spiral of short- and medium-chain fatty acid oxidation. At a lower rate than the hydratase reaction, catalyzes the isomerase reaction of trans-3-enoyl-CoA species (such as (3E)-hexenoyl-CoA) to trans-2-enoyl-CoA species (such as (2E)-hexenoyl-CoA), which are subsequently hydrated to 3(S)-3-hydroxyacyl-CoA species (such as (3S)-hydroxyhexanoyl-CoA). This Rattus norvegicus (Rat) protein is Enoyl-CoA hydratase, mitochondrial.